The following is a 332-amino-acid chain: Large ribosomal subunit protein mL44 (332 aa).

The N-terminal 30 residues, 1–30 (MASGLTRLLLRGPRCLLATAGLTLIPPVRG), are a transit peptide targeting the mitochondrion. The 143-residue stretch at 86-228 (DLLKTAFVNS…LITQMTGKEL (143 aa)) folds into the RNase III domain. A DRBM domain is found at 236–306 (NPMGLLVQEL…ARVALRKLYG (71 aa)).

Belongs to the ribonuclease III family. Mitochondrion-specific ribosomal protein mL44 subfamily. Component of the mitochondrial ribosome large subunit (39S) which comprises a 16S rRNA and about 50 distinct proteins.

It is found in the mitochondrion. Functionally, component of the 39S subunit of mitochondrial ribosome. May have a function in the assembly/stability of nascent mitochondrial polypeptides exiting the ribosome. The protein is Large ribosomal subunit protein mL44 (MRPL44) of Bos taurus (Bovine).